The following is a 357-amino-acid chain: MHMNICLLPGDGIGPEIVAQGTKVLDAVARRFGHTVSTSSALIGGAAIDATGSPLPDATVEACRTSDAVLLGAVGGPKWDDLPSEKRPEKGLLGIRKALGLFANLRPAALFPELAGACLLRADIAAAGLDLVVVRELTGDVYFGQPAGIETRDGLRTGFNTMIYDEDEVRRIARVAFDTARARKRRVCSVDKANVLATSRLWREVVEEVARDYPDVELSHMYVDNAAMQLVRWPAQFDVIVTGNLFGDILSDEAAVITGSIGMLPSASMGSGGPALFEPIHGSAPDIAGQDKANPIATILSVGMMLRLGFGLAAEADAIDAAVRRVLAEGYRTGDIMENGRTLVGTVSMGNLIAERI.

76–89 (GPKWDDLPSEKRPE) contributes to the NAD(+) binding site. The substrate site is built by arginine 96, arginine 106, arginine 135, and aspartate 224. Positions 224, 248, and 252 each coordinate Mg(2+). Residue 282–294 (GSAPDIAGQDKAN) coordinates NAD(+).

It belongs to the isocitrate and isopropylmalate dehydrogenases family. LeuB type 1 subfamily. In terms of assembly, homodimer. Mg(2+) serves as cofactor. Mn(2+) is required as a cofactor.

The protein resides in the cytoplasm. The enzyme catalyses (2R,3S)-3-isopropylmalate + NAD(+) = 4-methyl-2-oxopentanoate + CO2 + NADH. It participates in amino-acid biosynthesis; L-leucine biosynthesis; L-leucine from 3-methyl-2-oxobutanoate: step 3/4. Catalyzes the oxidation of 3-carboxy-2-hydroxy-4-methylpentanoate (3-isopropylmalate) to 3-carboxy-4-methyl-2-oxopentanoate. The product decarboxylates to 4-methyl-2 oxopentanoate. The protein is 3-isopropylmalate dehydrogenase of Nitratidesulfovibrio vulgaris (strain ATCC 29579 / DSM 644 / CCUG 34227 / NCIMB 8303 / VKM B-1760 / Hildenborough) (Desulfovibrio vulgaris).